The sequence spans 467 residues: Na(+)-translocating NADH-quinone reductase subunit A (467 aa).

This sequence belongs to the NqrA family. As to quaternary structure, composed of six subunits; NqrA, NqrB, NqrC, NqrD, NqrE and NqrF.

It catalyses the reaction a ubiquinone + n Na(+)(in) + NADH + H(+) = a ubiquinol + n Na(+)(out) + NAD(+). Its function is as follows. NQR complex catalyzes the reduction of ubiquinone-1 to ubiquinol by two successive reactions, coupled with the transport of Na(+) ions from the cytoplasm to the periplasm. NqrA to NqrE are probably involved in the second step, the conversion of ubisemiquinone to ubiquinol. This is Na(+)-translocating NADH-quinone reductase subunit A from Chlamydia pneumoniae (Chlamydophila pneumoniae).